The primary structure comprises 177 residues: Large ribosomal subunit protein uL5 (177 aa).

The protein belongs to the universal ribosomal protein uL5 family. In terms of assembly, part of the 50S ribosomal subunit; part of the 5S rRNA/L5/L18/L25 subcomplex. Contacts the 5S rRNA and the P site tRNA. Forms a bridge to the 30S subunit in the 70S ribosome.

Functionally, this is one of the proteins that bind and probably mediate the attachment of the 5S RNA into the large ribosomal subunit, where it forms part of the central protuberance. In the 70S ribosome it contacts protein S13 of the 30S subunit (bridge B1b), connecting the 2 subunits; this bridge is implicated in subunit movement. Contacts the P site tRNA; the 5S rRNA and some of its associated proteins might help stabilize positioning of ribosome-bound tRNAs. This Anaplasma phagocytophilum (strain HZ) protein is Large ribosomal subunit protein uL5.